The following is a 129-amino-acid chain: MRLKVGFQGGGCFRKDALCLEGGVSARWARAPHSAPLRPPRELHAAPPPATPTQTVVRPAGFPRRTRLMVRSAPPTQRPPTGSGCVSGLWRKGLGLRPQTLLRVGSVVLSSAPALRPRLGPCLRPPPSD.

The disordered stretch occupies residues 34–57; sequence SAPLRPPRELHAAPPPATPTQTVV.

This is an uncharacterized protein from Homo sapiens (Human).